The sequence spans 577 residues: Endopolyphosphatase (577 aa).

At 1–2 the chain is on the cytoplasmic side; sequence MR. Residues 3–23 traverse the membrane as a helical; Signal-anchor for type II membrane protein segment; the sequence is PSVITVAVLFVQSTWASFAFG. Over 24–577 the chain is Vacuolar; sequence NPMSMRNKAH…YIGSISDFED (554 aa). N-linked (GlcNAc...) asparagine glycosylation is found at N363, N370, N375, and N399. The tract at residues 430–460 is disordered; sequence SDYEIDKKKKKKKKNNKKKKKNKRKNIKPGP. Over residues 437 to 456 the composition is skewed to basic residues; the sequence is KKKKKKKNNKKKKKNKRKNI. N-linked (GlcNAc...) asparagine glycosylation occurs at N481.

This sequence belongs to the endopolyphosphatase PPN1 family. Requires a divalent metal cation as cofactor. Post-translationally, processing by proteases in the vacuole may be required for activation.

The protein localises to the vacuole membrane. It catalyses the reaction [phosphate](n+1) + n H2O = (n+1) phosphate + n H(+). Functionally, catalyzes the hydrolysis of inorganic polyphosphate (polyP) chains of many hundreds of phosphate residues into shorter lengths. The sequence is that of Endopolyphosphatase (ppn1) from Schizosaccharomyces pombe (strain 972 / ATCC 24843) (Fission yeast).